The primary structure comprises 345 residues: Linoleate 10R-lipoxygenase COP4 (345 aa).

Residues Asp-87, Asp-91, Asn-222, Ser-226, and Glu-230 each coordinate Mg(2+). The DDXXD motif motif lies at 87–91 (DEISD).

It belongs to the terpene synthase family. Mg(2+) is required as a cofactor.

The catalysed reaction is (2E,6E)-farnesyl diphosphate + H2O = cubebol + diphosphate. It carries out the reaction (2E,6E)-farnesyl diphosphate = beta-copaene + diphosphate. The enzyme catalyses (2E,6E)-farnesyl diphosphate = beta-cubebene + diphosphate. It catalyses the reaction (2E,6E)-farnesyl diphosphate = (+)-sativene + diphosphate. Its function is as follows. Sesquiterpene synthase that catalyzes the cyclization of farnesyl diphosphate (FPP) into multiple products, including germacrene D, beta-copaene, beta-cubebene, (+)-sativene and cubebol, a natural sesquiterpene alcohol used in the food industry for its cooling and refreshing taste. Terpenoid hydrocarbons resulting from cyclization of farnesyl diphosphate are intermediates in the biosynthesis of biologically active compounds such as antibiotics, toxins and pheromones. The sequence is that of Linoleate 10R-lipoxygenase COP4 (COP4) from Coprinopsis cinerea (strain Okayama-7 / 130 / ATCC MYA-4618 / FGSC 9003) (Inky cap fungus).